Consider the following 176-residue polypeptide: MTTIVSVRRNGHVVIAGDGQATLGNTVMKGNVKKVRRLYNDKVIAGFAGGTADAFTLFELFERKLEMHQGHLVKAAVELAKDWRTDRMLRKLEALLAVADENASLIITGNGDVIQPENDLIAIGSGGPYAQAAARALLENTELSAREIAEKALGIAGDICIYTNHFHTIEELNSKA.

Residue Thr-2 is part of the active site. Na(+)-binding residues include Gly-157, Cys-160, and Thr-163.

It belongs to the peptidase T1B family. HslV subfamily. A double ring-shaped homohexamer of HslV is capped on each side by a ring-shaped HslU homohexamer. The assembly of the HslU/HslV complex is dependent on binding of ATP.

It is found in the cytoplasm. The catalysed reaction is ATP-dependent cleavage of peptide bonds with broad specificity.. Allosterically activated by HslU binding. Protease subunit of a proteasome-like degradation complex believed to be a general protein degrading machinery. This chain is ATP-dependent protease subunit HslV, found in Enterobacter sp. (strain 638).